A 240-amino-acid polypeptide reads, in one-letter code: Large ribosomal subunit protein uL1 (240 aa).

The protein belongs to the universal ribosomal protein uL1 family. Part of the 50S ribosomal subunit.

In terms of biological role, binds directly to 23S rRNA. The L1 stalk is quite mobile in the ribosome, and is involved in E site tRNA release. Functionally, protein L1 is also a translational repressor protein, it controls the translation of the L11 operon by binding to its mRNA. This is Large ribosomal subunit protein uL1 from Nocardioides sp. (strain ATCC BAA-499 / JS614).